Here is a 404-residue protein sequence, read N- to C-terminus: Omega-3 fatty acid desaturase, chloroplastic (404 aa).

Positions 28–50 (TVDSSSSPPIEEEPKTQRFDPGA) are disordered. The short motif at 121-125 (HDCGH) is the Histidine box-1 element. Residues 157–161 (HRTHH) carry the Histidine box-2 motif. A Histidine box-3 motif is present at residues 324-328 (HVIHH).

The protein belongs to the fatty acid desaturase type 1 family.

It is found in the plastid. It localises to the chloroplast membrane. Its pathway is lipid metabolism; polyunsaturated fatty acid biosynthesis. In terms of biological role, chloroplast omega-3 fatty acid desaturase introduces the third double bond in the biosynthesis of 16:3 and 18:3 fatty acids, important constituents of plant membranes. It is thought to use ferredoxin as an electron donor and to act on fatty acids esterified to galactolipids, sulfolipids and phosphatidylglycerol. This is Omega-3 fatty acid desaturase, chloroplastic (FAD7) from Brassica napus (Rape).